The following is a 120-amino-acid chain: Photosystem II extrinsic protein U (120 aa).

Positions 1 to 29 (MKRLLSLLTGVLVMTGLLMALIFPQSAYA) are cleaved as a signal peptide.

Belongs to the PsbU family. In terms of assembly, PSII is composed of 1 copy each of membrane proteins PsbA, PsbB, PsbC, PsbD, PsbE, PsbF, PsbH, PsbI, PsbJ, PsbK, PsbL, PsbM, PsbT, PsbX, PsbY, Psb30/Ycf12, peripheral proteins PsbO, CyanoQ (PsbQ), PsbU, PsbV and a large number of cofactors. It forms dimeric complexes.

It is found in the cellular thylakoid membrane. In terms of biological role, one of the extrinsic, lumenal subunits of photosystem II (PSII). PSII is a light-driven water plastoquinone oxidoreductase, using light energy to abstract electrons from H(2)O, generating a proton gradient subsequently used for ATP formation. The extrinsic proteins stabilize the structure of photosystem II oxygen-evolving complex (OEC), the ion environment of oxygen evolution and protect the OEC against heat-induced inactivation. In Prochlorococcus marinus (strain MIT 9303), this protein is Photosystem II extrinsic protein U.